We begin with the raw amino-acid sequence, 494 residues long: Ubiquinol-cytochrome-c reductase complex core protein I, mitochondrial (494 aa).

Position 70 (histidine 70) interacts with Zn(2+). Glutamate 73 (proton acceptor) is an active-site residue. 2 residues coordinate Zn(2+): histidine 74 and glutamate 150.

Belongs to the peptidase M16 family. UQCRC1/QCR1 subfamily. As to quaternary structure, component of the ubiquinol-cytochrome c oxidoreductase (cytochrome b-c1 complex, complex III, CIII), a multisubunit enzyme composed of 10 subunits. The complex is composed of 3 respiratory subunits cytochrome b, cytochrome c1 and Rieske protein, 2 core protein subunits, and additional low-molecular weight protein subunits. The complex exists as an obligatory dimer and forms supercomplexes (SCs) in the inner mitochondrial membrane with cytochrome c oxidase (complex IV, CIV). Requires Zn(2+) as cofactor. The N-terminus is blocked.

The protein resides in the mitochondrion inner membrane. Component of the ubiquinol-cytochrome c oxidoreductase, a multisubunit transmembrane complex that is part of the mitochondrial electron transport chain which drives oxidative phosphorylation. The respiratory chain contains 3 multisubunit complexes succinate dehydrogenase (complex II, CII), ubiquinol-cytochrome c oxidoreductase (cytochrome b-c1 complex, complex III, CIII) and cytochrome c oxidase (complex IV, CIV), that cooperate to transfer electrons derived from NADH and succinate to molecular oxygen, creating an electrochemical gradient over the inner membrane that drives transmembrane transport and the ATP synthase. The cytochrome b-c1 complex catalyzes electron transfer from ubiquinol to cytochrome c, linking this redox reaction to translocation of protons across the mitochondrial inner membrane, with protons being carried across the membrane as hydrogens on the quinol. In the process called Q cycle, 2 protons are consumed from the matrix, 4 protons are released into the intermembrane space and 2 electrons are passed to cytochrome c. This Euglena gracilis protein is Ubiquinol-cytochrome-c reductase complex core protein I, mitochondrial.